We begin with the raw amino-acid sequence, 2812 residues long: Polyunsaturated fatty acid synthase subunit A (2812 aa).

Residues 12–472 enclose the Ketosynthase family 3 (KS3) domain; it reads DTRIAVIGMS…GANYHAVLEE (461 aa). Active-site for beta-ketoacyl synthase activity residues include cysteine 213, histidine 348, and histidine 390. One can recognise a Malonyl-CoA:ACP transacylase (MAT) domain in the interval 602–913; sequence LFSGQGAQYT…TVSVNPASGK (312 aa). The stretch at 1000–1048 forms a coiled coil; that stretch reads DEEAKREAARLQKQLEDAQRQLDEAKRAADEANQKLAAAKEEAKSAAAS. Carrier domains follow at residues 1114-1193, 1232-1308, and 1342-1418; these read ALLA…KAEI, ERAE…KAEI, and AKAE…KAEI. An O-(pantetheine 4'-phosphoryl)serine mark is found at serine 1152, serine 1267, and serine 1377. Residues 1422 to 1442 are disordered; that stretch reads SAPAPAAAAPAPAAPAPAAAA. Residues 1423–1442 show a composition bias toward low complexity; sequence APAPAAAAPAPAAPAPAAAA. The Carrier 4 domain occupies 1455–1531; the sequence is AKAETVVMEV…EVVDAMKAEI (77 aa). Serine 1490 bears the O-(pantetheine 4'-phosphoryl)serine mark. Residues 1535–1555 are disordered; the sequence is SAPAPAAAAPAPAAPAPAAAA. Residues 1536 to 1555 show a composition bias toward low complexity; sequence APAPAAAAPAPAAPAPAAAA. Carrier domains are found at residues 1568-1644, 1681-1757, 1792-1868, and 1903-1979; these read AKAE…KAEI. Serine 1603, serine 1716, serine 1827, and serine 1938 each carry O-(pantetheine 4'-phosphoryl)serine. The Ketoreductase (KR) domain maps to 2257–2484; that stretch reads VVSGGARGIT…VKSICFGPWD (228 aa). The interval 2524-2651 is N-terminal hotdog fold; that stretch reads EILVGNWRTP…RAVVVLSSQG (128 aa). In terms of domain architecture, PKS/mFAS DH spans 2524–2812; that stretch reads EILVGNWRTP…SVIATDSLAF (289 aa). A dehydratase (DH) domain region spans residues 2540 to 2800; it reads ETITLHRKIS…NEQGDLFIDV (261 aa). The Proton acceptor; for dehydratase activity role is filled by histidine 2559. Residues 2666 to 2812 are C-terminal hotdog fold; the sequence is ADPAAQSAVY…SVIATDSLAF (147 aa). Residue aspartate 2730 is the Proton donor; for dehydratase activity of the active site.

As to quaternary structure, component of the polyunsaturated fatty acid synthase complex composed of at least ORF-A, ORF-B and ORF-C. Pantetheine 4'-phosphate is required as a cofactor.

Its pathway is lipid metabolism; fatty acid biosynthesis. Poliketide synthase-like protein; part of the polyunsaturated fatty acid synthase composed of the 3 PKS-like subunits A, B and C. While the saturated fatty acids (SFAs) in Thraustochytrium are produced by the conventional fatty acid synthase (FAS) pathway, polyunsaturated fatty acids (PUFAs) including docosahexeanoic acid (DHA) and docosapentaenoic acid (DPA) are synthesized via an anaerobical PKS pathway. PUFA synthase assimilates fatty acyl-CoA, the product of FAS, as the starter unit to synthesize DPA, and this starter unit may be butyryl-CoA, hexanoyl-CoA, or octanoyl-CoA. DPA and DHA biosynthesis seem to differ by the reduction at the N-3 position by PUFA synthase, not the extension of carbon chain. In DHA biosynthesis, PUFA synthase extends the fatty acyl chain from the methyl toward the carboxyl end, and the double bond is formed when the carbon chain is growing, instead of afterward. Therefore, PUFA synthase is unable to transform DPA to DHA, suggesting that DPA is not the precursor of DHA. Moreover, DPA molecule is partly extended by FAS KS domain, so DPA biosynthesis is less dependent on PUFA synthase KS domain than DHA. The polypeptide is Polyunsaturated fatty acid synthase subunit A (Thraustochytrium sp. (strain ATCC 26185 / S-3)).